The following is a 234-amino-acid chain: Carboxy-S-adenosyl-L-methionine synthase (234 aa).

Residues Tyr35, 60 to 62 (GCS), 83 to 84 (DN), 109 to 110 (DI), Asn124, and Arg191 each bind S-adenosyl-L-methionine.

This sequence belongs to the class I-like SAM-binding methyltransferase superfamily. Cx-SAM synthase family. In terms of assembly, homodimer.

The catalysed reaction is prephenate + S-adenosyl-L-methionine = carboxy-S-adenosyl-L-methionine + 3-phenylpyruvate + H2O. Its function is as follows. Catalyzes the conversion of S-adenosyl-L-methionine (SAM) to carboxy-S-adenosyl-L-methionine (Cx-SAM). The polypeptide is Carboxy-S-adenosyl-L-methionine synthase (Campylobacter concisus (strain 13826)).